Consider the following 143-residue polypeptide: Peptide methionine sulfoxide reductase B9 (143 aa).

The region spanning 19 to 140 (DQDWRAILSP…NSVSLKFSEI (122 aa)) is the MsrB domain. Positions 58, 61, 104, and 107 each coordinate Zn(2+). The cysteines at positions 76 and 129 are disulfide-linked. Residue Cys-129 is the Nucleophile of the active site.

Belongs to the MsrB Met sulfoxide reductase family. Zn(2+) is required as a cofactor.

The protein localises to the cytoplasm. It localises to the cytosol. It catalyses the reaction L-methionyl-[protein] + [thioredoxin]-disulfide + H2O = L-methionyl-(R)-S-oxide-[protein] + [thioredoxin]-dithiol. Catalyzes the reduction of methionine sulfoxide (MetSO) to methionine in proteins. Plays a protective role against oxidative stress by restoring activity to proteins that have been inactivated by methionine oxidation. MSRB family specifically reduces the MetSO R-enantiomer. The chain is Peptide methionine sulfoxide reductase B9 (MSRB9) from Arabidopsis thaliana (Mouse-ear cress).